We begin with the raw amino-acid sequence, 424 residues long: Enolase (424 aa).

Gln165 is a (2R)-2-phosphoglycerate binding site. Glu207 (proton donor) is an active-site residue. Residues Asp244, Glu283, and Asp310 each contribute to the Mg(2+) site. Residues Lys335, Arg364, Ser365, and Lys386 each contribute to the (2R)-2-phosphoglycerate site. The active-site Proton acceptor is the Lys335.

This sequence belongs to the enolase family. The cofactor is Mg(2+).

It is found in the cytoplasm. It localises to the secreted. Its subcellular location is the cell surface. It carries out the reaction (2R)-2-phosphoglycerate = phosphoenolpyruvate + H2O. Its pathway is carbohydrate degradation; glycolysis; pyruvate from D-glyceraldehyde 3-phosphate: step 4/5. Its function is as follows. Catalyzes the reversible conversion of 2-phosphoglycerate (2-PG) into phosphoenolpyruvate (PEP). It is essential for the degradation of carbohydrates via glycolysis. The chain is Enolase from Chlamydia muridarum (strain MoPn / Nigg).